The following is a 176-amino-acid chain: Probable DNA-directed RNA polymerase subunit delta (176 aa).

The region spanning 14 to 81 (KSFIDMAYTL…GENLWGLRDW (68 aa)) is the HTH HARE-type domain. Residues 114–176 (LGEDEMDDDD…DFEDEEDFKA (63 aa)) are disordered. Composition is skewed to acidic residues over residues 116–145 (EDEM…QVEE) and 153–176 (VIEE…DFKA).

Belongs to the RpoE family. RNAP is composed of a core of 2 alpha, a beta and a beta' subunits. The core is associated with a delta subunit and one of several sigma factors.

Functionally, participates in both the initiation and recycling phases of transcription. In the presence of the delta subunit, RNAP displays an increased specificity of transcription, a decreased affinity for nucleic acids, and an increased efficiency of RNA synthesis because of enhanced recycling. The sequence is that of Probable DNA-directed RNA polymerase subunit delta from Staphylococcus aureus (strain bovine RF122 / ET3-1).